The primary structure comprises 1023 residues: Sodium/potassium-transporting ATPase subunit alpha-1 (1023 aa).

Residues 1–5 constitute a propeptide that is removed on maturation; that stretch reads MAFKV. The segment covering 1–11 has biased composition (basic and acidic residues); sequence MAFKVGRDKYE. The interval 1–38 is disordered; it reads MAFKVGRDKYEPAAVSEQGDKKGKKGKKDRDMDELKKE. Residues 6 to 87 are Cytoplasmic-facing; that stretch reads GRDKYEPAAV…NALTPPPTTP (82 aa). The residue at position 9 (lysine 9) is an N6-acetyllysine. Tyrosine 10 carries the phosphotyrosine modification. Serine 16 bears the Phosphoserine; by PKC mark. An N6-acetyllysine modification is found at lysine 21. The segment covering 28–38 has biased composition (basic and acidic residues); that stretch reads KDRDMDELKKE. Serine 40 and serine 47 each carry phosphoserine. Residues 82–84 are phosphoinositide-3 kinase binding; that stretch reads PPP. The helical transmembrane segment at 88-108 threads the bilayer; the sequence is EWIKFCRQLFGGFSMLLWIGA. Residues 109–131 lie on the Extracellular side of the membrane; the sequence is ILCFLAYSIQAATEEEPQNDNLY. Residues 132-152 form a helical membrane-spanning segment; sequence LGVVLSAVVIITGCFSYYQEA. Over 153-288 the chain is Cytoplasmic; sequence KSSKIMESFK…GGQTPIAAEI (136 aa). Residues 216–235 form a disordered region; sequence SSLTGESEPQTRSPDFTNEN. Serine 228 is modified (phosphoserine). Tyrosine 260 bears the Phosphotyrosine mark. The helical transmembrane segment at 289–308 threads the bilayer; sequence EHFIHIITGVAVFLGVSFFI. Topologically, residues 309–320 are extracellular; it reads LSLILEYTWLEA. The chain crosses the membrane as a helical span at residues 321-338; sequence VIFLIGIIVANVPEGLLA. Residues 339–772 are Cytoplasmic-facing; that stretch reads TVTVCLTLTA…EEGRLIFDNL (434 aa). Aspartate 376 functions as the 4-aspartylphosphate intermediate in the catalytic mechanism. Phosphoserine occurs at positions 452 and 484. Lysine 487 is an ATP binding site. Tyrosine 542 carries the phosphotyrosine modification. The tract at residues 596 to 717 is mediates interaction with SCN7A; that stretch reads RAAVPDAVGK…QGAIVAVTGD (122 aa). At lysine 661 the chain carries N6-succinyllysine. Phosphoserine is present on residues serine 668 and serine 675. Aspartate 717 and aspartate 721 together coordinate Mg(2+). Residues 773–792 traverse the membrane as a helical segment; it reads KKSIAYTLTSNIPEITPFLI. Over 793 to 802 the chain is Extracellular; it reads FIIANIPLPL. Residues 803–823 form a helical membrane-spanning segment; that stretch reads GTVTILCIDLGTDMVPAISLA. The Cytoplasmic portion of the chain corresponds to 824 to 843; the sequence is YEQAESDIMKRQPRNPKTDK. A helical transmembrane segment spans residues 844 to 866; it reads LVNERLISTAYGQIGMIQALGGF. At 867 to 918 the chain is on the extracellular side; it reads FTYFVILAENGFLPLHLLGLRVDWDDRWINDVEDSYGQQWTYEQRKIVEFTC. The helical transmembrane segment at 919–938 threads the bilayer; it reads HTAFFVSIVVVQWADLVICK. Over 939–951 the chain is Cytoplasmic; sequence TRRNSVFQQGMKN. Serine 943 carries the phosphoserine; by PKA modification. Residues 952–970 form a helical membrane-spanning segment; it reads KILIFGLFEETALAAFLSY. Residues 971-985 are Extracellular-facing; that stretch reads CPGMGVALRMYPLKP. The chain crosses the membrane as a helical span at residues 986-1006; that stretch reads TWWFCAFPYSLLIFVYDEVRK. The Cytoplasmic portion of the chain corresponds to 1007 to 1023; it reads LIIRRRPGGWVEKETYY.

This sequence belongs to the cation transport ATPase (P-type) (TC 3.A.3) family. Type IIC subfamily. In terms of assembly, the sodium/potassium-transporting ATPase is composed of a catalytic alpha subunit, an auxiliary non-catalytic beta subunit and an additional regulatory subunit. Interacts with regulatory subunit FXYD1. Interacts with regulatory subunit FXYD3. Interacts with SIK1. Interacts with SLC35G1 and STIM1. Interacts with CLN3; this interaction regulates the sodium/potassium-transporting ATPase complex localization at the plasma membrane. Interacts with SCN7A; activates ATP1A1 P-type sodium:potassium-exchanging transporter activity which indirectly signals to nearby neurons to regulate sodium homeostasis. Post-translationally, phosphorylation on Tyr-10 modulates pumping activity. Phosphorylation of Ser-943 by PKA modulates the response of ATP1A1 to PKC. Dephosphorylation by protein phosphatase 2A (PP2A) following increases in intracellular sodium, leading to increase catalytic activity.

It localises to the cell membrane. Its subcellular location is the basolateral cell membrane. It is found in the sarcolemma. The protein resides in the cell projection. The protein localises to the axon. It localises to the melanosome. The enzyme catalyses K(+)(out) + Na(+)(in) + ATP + H2O = K(+)(in) + Na(+)(out) + ADP + phosphate + H(+). Its function is as follows. This is the catalytic component of the active enzyme, which catalyzes the hydrolysis of ATP coupled with the exchange of sodium and potassium ions across the plasma membrane. This action creates the electrochemical gradient of sodium and potassium ions, providing the energy for active transport of various nutrients. Could also be part of an osmosensory signaling pathway that senses body-fluid sodium levels and controls salt intake behavior as well as voluntary water intake to regulate sodium homeostasis. The sequence is that of Sodium/potassium-transporting ATPase subunit alpha-1 (ATP1A1) from Pongo abelii (Sumatran orangutan).